The sequence spans 73 residues: Maltose-binding periplasmic protein (73 aa).

The first 30 residues, 1–30 (MMTKTNLKMGARTLALSVLATLVLSASALA), serve as a signal peptide directing secretion.

It belongs to the bacterial solute-binding protein 1 family.

The protein localises to the periplasm. Its function is as follows. Involved in the high-affinity maltose membrane transport system. Initial receptor for the active transport of and chemotaxis toward maltooligosaccharides. In Photorhabdus luminescens (Xenorhabdus luminescens), this protein is Maltose-binding periplasmic protein (malE).